The chain runs to 100 residues: MTNRIELSGVVAKALVRSQSPSGVKHCHFWLEHRSTMVEADLPRQVFCRLPVVVSGARSEALTQNLVQGSSILVSGFLAYQTSRNGVGKLVLHADKISQI.

In terms of domain architecture, SSB spans 1–100; the sequence is MTNRIELSGV…VLHADKISQI (100 aa).

The protein belongs to the PriB family. In terms of assembly, homodimer. Interacts with PriA and DnaT. Component of the replication restart primosome. Primosome assembly occurs via a 'hand-off' mechanism. PriA binds to replication forks, subsequently PriB then DnaT bind; DnaT then displaces ssDNA to generate the helicase loading substrate.

Functionally, involved in the restart of stalled replication forks, which reloads the replicative helicase on sites other than the origin of replication; the PriA-PriB pathway is the major replication restart pathway. During primosome assembly it facilitates complex formation between PriA and DnaT on DNA; stabilizes PriA on DNA. Stimulates the DNA unwinding activity of PriA helicase. This is Replication restart protein PriB from Vibrio cholerae serotype O1 (strain ATCC 39315 / El Tor Inaba N16961).